Here is a 291-residue protein sequence, read N- to C-terminus: N-acetylmannosamine kinase (291 aa).

ATP-binding positions include Ala5 to Lys12 and Gly132 to Val139. The Zn(2+) site is built by His156, Cys166, Cys168, and Cys173.

The protein belongs to the ROK (NagC/XylR) family. NanK subfamily. Homodimer.

The enzyme catalyses an N-acyl-D-mannosamine + ATP = an N-acyl-D-mannosamine 6-phosphate + ADP + H(+). The protein operates within amino-sugar metabolism; N-acetylneuraminate degradation; D-fructose 6-phosphate from N-acetylneuraminate: step 2/5. Functionally, catalyzes the phosphorylation of N-acetylmannosamine (ManNAc) to ManNAc-6-P. The chain is N-acetylmannosamine kinase (nanK2) from Escherichia coli O6:H1 (strain CFT073 / ATCC 700928 / UPEC).